Reading from the N-terminus, the 306-residue chain is Glutathione transport system permease protein GsiC (306 aa).

The Cytoplasmic segment spans residues 1 to 8; sequence MLNYVLKR. A helical transmembrane segment spans residues 9 to 29; the sequence is LLGLIPTLLIVAVLVFLFVHL. At 30 to 102 the chain is on the periplasmic side; sequence LPGDPARLIA…SRFLPTLWLT (73 aa). Positions 95 to 292 constitute an ABC transmembrane type-1 domain; the sequence is FLPTLWLTIT…LEFILINLVV (198 aa). The chain crosses the membrane as a helical span at residues 103–123; sequence ITSMIWAVLFGMAIGIAAAVW. Topologically, residues 124-134 are cytoplasmic; the sequence is RNRWPDRLGMT. A helical membrane pass occupies residues 135 to 155; sequence LAVTGISFPAFALGMLLMQIF. At 156 to 168 the chain is on the periplasmic side; that stretch reads SVDLGWLPTVGAD. Residues 169–189 form a helical membrane-spanning segment; that stretch reads SWQHYILPSLTLGAAVASVMA. Residues 190–228 lie on the Cytoplasmic side of the membrane; sequence RFTRSSFVDVLSEDYMRTARAKGVSETWVVLKHGLRNAM. A helical membrane pass occupies residues 229–249; the sequence is IPVVTMMGLQFGFLLGGSIVV. Over 250-278 the chain is Periplasmic; that stretch reads EKVFNWPGLGRLLVDSVDMRDYPVIQAEV. Residues 279–299 form a helical membrane-spanning segment; that stretch reads LLFSLEFILINLVVDVLYAAI. At 300–306 the chain is on the cytoplasmic side; that stretch reads NPAIRYK.

The protein belongs to the binding-protein-dependent transport system permease family. As to quaternary structure, the complex is composed of two ATP-binding proteins (GsiA), two transmembrane proteins (GsiC and GsiD) and a solute-binding protein (GsiB).

Its subcellular location is the cell inner membrane. In terms of biological role, part of the ABC transporter complex GsiABCD involved in glutathione import. Probably responsible for the translocation of the substrate across the membrane. This is Glutathione transport system permease protein GsiC from Salmonella paratyphi A (strain ATCC 9150 / SARB42).